A 295-amino-acid polypeptide reads, in one-letter code: Secreted frizzled-related protein 2 (295 aa).

The signal sequence occupies residues 1–24 (MLQGPGSLLLLFLASHCCLGSARG). The region spanning 35–155 (YKRSNCKPIP…PQDNDLCIPL (121 aa)) is the FZ domain. Intrachain disulfides connect Cys40–Cys103, Cys50–Cys96, Cys87–Cys125, Cys114–Cys152, Cys118–Cys142, Cys172–Cys245, Cys175–Cys247, and Cys190–Cys295. Positions 172–295 (CEACKNKNDD…ISRSIRKLQC (124 aa)) constitute an NTR domain.

The protein belongs to the secreted frizzled-related protein (sFRP) family. As to expression, expressed in adipose tissue, heart, brain, skeletal muscle, pancreas, thymus, prostate, testis, ovary, small intestine and colon. Highest levels in adipose tissue, small intestine and colon.

It is found in the secreted. In terms of biological role, soluble frizzled-related proteins (sFRPS) function as modulators of Wnt signaling through direct interaction with Wnts. They have a role in regulating cell growth and differentiation in specific cell types. SFRP2 may be important for eye retinal development and for myogenesis. This Homo sapiens (Human) protein is Secreted frizzled-related protein 2 (SFRP2).